We begin with the raw amino-acid sequence, 54 residues long: Large ribosomal subunit protein bL32c (54 aa).

Residues 1-25 (MAVPKKRTSKAKKNSRKANWKRKAA) show a composition bias toward basic residues. Positions 1–26 (MAVPKKRTSKAKKNSRKANWKRKAAK) are disordered.

Belongs to the bacterial ribosomal protein bL32 family.

Its subcellular location is the plastid. It is found in the chloroplast. The chain is Large ribosomal subunit protein bL32c from Thalassiosira pseudonana (Marine diatom).